The sequence spans 110 residues: Movement protein TGB2 (110 aa).

The Cytoplasmic segment spans residues 1-10; that stretch reads MSGAHHLTPP. Residues 11 to 34 form a helical membrane-spanning segment; sequence TDYGKPVLAASIGISLALLVYTAT. Residues 35-76 lie on the Lumenal side of the membrane; that stretch reads RSTLPHVGDNLHALPHGGRYVDGTKSISYFSPSASKTRDPFP. The chain crosses the membrane as a helical span at residues 77–92; the sequence is FAFLLILTLSGLILLL. Topologically, residues 93–110 are cytoplasmic; it reads SRRRSNPHSCPSCGTPHA.

This sequence belongs to the Tymovirales TGBp2 protein family.

The protein localises to the host endoplasmic reticulum membrane. Its function is as follows. Plays a role in viral cell-to-cell propagation, by facilitating genome transport to neighboring plant cells through plasmosdesmata,. This Plantago asiatica (P1AMV) protein is Movement protein TGB2.